The primary structure comprises 462 residues: Glycine--tRNA ligase (462 aa).

2 residues coordinate substrate: R101 and E164. Residues 196–198, 206–211, 283–284, and 327–330 contribute to the ATP site; these read RNE, FRTREF, EL, and GVDR. Substrate is bound at residue 211–215; it reads FEQME. A substrate-binding site is contributed by 323 to 327; it reads EPSAG.

This sequence belongs to the class-II aminoacyl-tRNA synthetase family. In terms of assembly, homodimer.

It localises to the cytoplasm. It catalyses the reaction tRNA(Gly) + glycine + ATP = glycyl-tRNA(Gly) + AMP + diphosphate. Functionally, catalyzes the attachment of glycine to tRNA(Gly). This is Glycine--tRNA ligase from Thermobifida fusca (strain YX).